We begin with the raw amino-acid sequence, 151 residues long: MLP-like protein 328 (151 aa).

It belongs to the MLP family.

The sequence is that of MLP-like protein 328 (MLP328) from Arabidopsis thaliana (Mouse-ear cress).